Consider the following 95-residue polypeptide: uncharacterized protein (95 aa).

The tract at residues 66-95 (EERGRLRGTEGPSRPPSSGAGDPRGATTLG) is disordered.

The protein belongs to the herpesviridae UL91 family.

This is an uncharacterized protein from Equine herpesvirus 2 (strain 86/87) (EHV-2).